The primary structure comprises 524 residues: MPVAVESAIPYPTPRKVDLAHHLSTEARIRQPNPIKSVWKAAQVRPGIINMGNGDPHHTLYPISSMNFIVPSLEGDHPVEAWRTGTSKTLVLSSHKDAPSTLSLRTAFAYGAGAGLPAVREALADLGARIHAPPNHTVCLSLGNADALTKCFRLFGDPDDSFLCEEFTFSAMTNAALALGIRWVPVRVDGGGLLPEDLERVMRCWDEKKQGKRPHVLYTVPCSQNPTGSTISLERRRRIYEVAHIYDIIIIEDDPYYFLQYDLQINQNTLKEHGYTRAMSEVLPRSFLSMDIDGRVVRLDSFSKVLAPGIRLGWITSSPFFADKLDMLTDSSTQHPHGLGQAYLAELLGPTGWGADGLMKWVHSLAREYERRRDLFVSVFDAKVAPTGCASAEVPQSGMFVWIQVHLETHPRFVVRTPDSGSDDEGDVLGAVMAAPGVLGEVARGGPITNTEQLMSELLRKLVESGVIMIPASTFAIVDRSGSTLSPIGDRANYLRATFVGTDETIRDGLTIFAQALEEFFNLK.

It belongs to the class-I pyridoxal-phosphate-dependent aminotransferase family. Pyridoxal 5'-phosphate is required as a cofactor.

It carries out the reaction L-tyrosine + 2-oxoglutarate = 3-(4-hydroxyphenyl)pyruvate + L-glutamate. It participates in secondary metabolite biosynthesis. Functionally, the L-tyrosine:2-oxoglutarate aminotransferase atrD and the atromentin synthetase atrA catalyze consecutive steps to turn over L-tyrosine into atromentin, which represents the generic precursor molecule for the entire terphenylquinone and pulvinic acid family of pigments, which are widely distributed secondary metabolites in homobasidiomycetes. The first step is catalyzed by atrD which converts L-tyrosine in to 4-hydroxyphenylpyruvate (4-HPP). Adenylation of two 4-HPP monomers by the atrA adenylation (A) domain, ester bond formation between monomers and atrA, and symmetric C-C-bond formation between two monomers by atrA leads to atromentin. This chain is L-tyrosine:2-oxoglutarate aminotransferase atrD, found in Tapinella panuoides (Oyster rollrim mushroom).